An 86-amino-acid polypeptide reads, in one-letter code: Large ribosomal subunit protein bL27c (86 aa).

The segment at 1–27 (MAHKKGSGSTRNGRDSNSKRLGVKKYG) is disordered.

Belongs to the bacterial ribosomal protein bL27 family.

The protein resides in the plastid. It localises to the chloroplast. The protein is Large ribosomal subunit protein bL27c (rpl27) of Porphyra purpurea (Red seaweed).